The primary structure comprises 184 residues: ATP synthase subunit b 1 (184 aa).

Residues 4–24 traverse the membrane as a helical segment; sequence LSILAVLAASPAMAATGPFLS.

It belongs to the ATPase B chain family. As to quaternary structure, F-type ATPases have 2 components, F(1) - the catalytic core - and F(0) - the membrane proton channel. F(1) has five subunits: alpha(3), beta(3), gamma(1), delta(1), epsilon(1). F(0) has three main subunits: a(1), b(2) and c(10-14). The alpha and beta chains form an alternating ring which encloses part of the gamma chain. F(1) is attached to F(0) by a central stalk formed by the gamma and epsilon chains, while a peripheral stalk is formed by the delta and b chains.

Its subcellular location is the cell inner membrane. F(1)F(0) ATP synthase produces ATP from ADP in the presence of a proton or sodium gradient. F-type ATPases consist of two structural domains, F(1) containing the extramembraneous catalytic core and F(0) containing the membrane proton channel, linked together by a central stalk and a peripheral stalk. During catalysis, ATP synthesis in the catalytic domain of F(1) is coupled via a rotary mechanism of the central stalk subunits to proton translocation. Its function is as follows. Component of the F(0) channel, it forms part of the peripheral stalk, linking F(1) to F(0). The protein is ATP synthase subunit b 1 of Cereibacter sphaeroides (strain ATCC 17029 / ATH 2.4.9) (Rhodobacter sphaeroides).